A 500-amino-acid chain; its full sequence is NAD(P)H-quinone oxidoreductase chain 4, chloroplastic (500 aa).

The next 14 membrane-spanning stretches (helical) occupy residues 4-24 (FPWL…IFFL), 31-51 (VIFW…TYAF), 84-104 (GLSI…TLAA), 111-131 (ARLF…LFSC), 134-154 (LLLF…LLSM), 167-187 (FILY…GIGL), 212-232 (IFYI…PLHT), 242-262 (HYST…YGLV), 272-292 (AHSL…IYAA), 308-328 (SSVS…DIGL), 330-350 (GALL…FLAG), 386-406 (LALP…GLIT), 411-431 (LLMA…LTPI), and 462-482 (LFLS…PDFV).

Belongs to the complex I subunit 4 family.

The protein resides in the plastid. The protein localises to the chloroplast thylakoid membrane. It carries out the reaction a plastoquinone + NADH + (n+1) H(+)(in) = a plastoquinol + NAD(+) + n H(+)(out). The enzyme catalyses a plastoquinone + NADPH + (n+1) H(+)(in) = a plastoquinol + NADP(+) + n H(+)(out). The protein is NAD(P)H-quinone oxidoreductase chain 4, chloroplastic of Jasminum nudiflorum (Winter jasmine).